Reading from the N-terminus, the 321-residue chain is Peroxidase 4 (321 aa).

Positions 1-25 (MASSSFSIVVVALGVLALFAGSSSA) are cleaved as a signal peptide. Gln-26 is subject to Pyrrolidone carboxylic acid. 4 disulfides stabilise this stretch: Cys-36-Cys-116, Cys-69-Cys-74, Cys-122-Cys-317, and Cys-201-Cys-226. The Proton acceptor role is filled by His-67. The Ca(2+) site is built by Asp-68, Val-71, Gly-73, Asp-75, and Ser-77. Pro-164 is a substrate binding site. A heme b-binding site is contributed by His-194. Thr-195 contacts Ca(2+). The N-linked (GlcNAc...) asparagine glycan is linked to Asn-210. Ca(2+)-binding residues include Asp-241, Thr-244, and Asp-249.

This sequence belongs to the peroxidase family. Classical plant (class III) peroxidase subfamily. Heme b serves as cofactor. Requires Ca(2+) as cofactor.

The protein resides in the secreted. The catalysed reaction is 2 a phenolic donor + H2O2 = 2 a phenolic radical donor + 2 H2O. In terms of biological role, removal of H(2)O(2), oxidation of toxic reductants, biosynthesis and degradation of lignin, suberization, auxin catabolism, response to environmental stresses such as wounding, pathogen attack and oxidative stress. These functions might be dependent on each isozyme/isoform in each plant tissue. The polypeptide is Peroxidase 4 (Vitis vinifera (Grape)).